Here is a 333-residue protein sequence, read N- to C-terminus: Cytochrome f (333 aa).

Positions 1 to 16 (MRNVFRTARLTRSARA) are cleaved as a signal peptide. The helical transmembrane segment at 17-36 (IVKTLLIAIATVTFYFTSDL) threads the bilayer. Positions 45, 66, 69, and 70 each coordinate heme. A helical membrane pass occupies residues 299-319 (VKWMIAFVALVMLAQVMLVLK).

Belongs to the cytochrome f family. As to quaternary structure, the 4 large subunits of the cytochrome b6-f complex are cytochrome b6, subunit IV (17 kDa polypeptide, PetD), cytochrome f and the Rieske protein, while the 4 small subunits are PetG, PetL, PetM and PetN. The complex functions as a dimer. Requires heme as cofactor.

The protein localises to the cellular thylakoid membrane. Component of the cytochrome b6-f complex, which mediates electron transfer between photosystem II (PSII) and photosystem I (PSI), cyclic electron flow around PSI, and state transitions. The polypeptide is Cytochrome f (Nostoc punctiforme (strain ATCC 29133 / PCC 73102)).